Here is a 463-residue protein sequence, read N- to C-terminus: Formate-nitrite transporter 2 (463 aa).

At 1-100 (MCSIPPLRLL…VKKTQLRIDR (100 aa)) the chain is on the cytoplasmic side. The chain crosses the membrane as a helical span at residues 101 to 121 (LLLQAFMAGIFVAMAGHCCTV). Residues 122–142 (LAGSYPTDPGDPLAVAKPTQK) lie on the Extracellular side of the membrane. Residues 143 to 163 (FIYGALFPVAFICIILTGAEL) form a helical membrane-spanning segment. Over 164–189 (FTGNTMTMLICYFQKRVTMLQLGVNW) the chain is Cytoplasmic. The helical transmembrane segment at 190 to 210 (LGSLAGNWLGALFGAYFLSYL) threads the bilayer. The Extracellular portion of the chain corresponds to 211-237 (TGALGDEHVRQFLFRTCVNKISYGWGE). A helical transmembrane segment spans residues 238–258 (CFLRGVGCNTFVCLAVWAVIA). Residues 259-265 (SENVAGK) are Cytoplasmic-facing. The chain crosses the membrane as a helical span at residues 266 to 286 (VLVMWFPIVAFCVGGYEHIIA). Residues 287–305 (NMYTLQAGLMAGAPVAILD) are Extracellular-facing. A helical transmembrane segment spans residues 306–326 (VIAFNFLPTLLGNIVGGCLLV). At 327-463 (GAVYAYNFYP…QTAESVAQQV (137 aa)) the chain is on the cytoplasmic side. Positions 424–463 (SGNLSTHARLDLPNRPVEPPSDGLEVTPQSQTAESVAQQV) are disordered. Positions 450–463 (TPQSQTAESVAQQV) are enriched in polar residues.

Belongs to the FNT transporter (TC 1.A.16) family. As to quaternary structure, homopentamer.

It is found in the cell membrane. It catalyses the reaction (S)-lactate(in) + H(+)(in) = (S)-lactate(out) + H(+)(out). It carries out the reaction formate(in) + H(+)(in) = formate(out) + H(+)(out). The catalysed reaction is pyruvate(out) + H(+)(out) = pyruvate(in) + H(+)(in). The enzyme catalyses acetate(out) + H(+)(out) = acetate(in) + H(+)(in). Its activity is regulated as follows. Inhibited by p-chloromercuribenzene sulfonate (pCMBS). Methyl methanethiosulfonate (MMTS) inhibits L-lactate but not formate transport. Inhibited by the Malaria Box compound MMV007839. Inhibited by BH-296, BH-317, BH-326 and BH-388 compounds. In terms of biological role, monocarboxylate-proton symporter; active in acidic-to-neutral pH range. Transports L-lactate and formate. This is Formate-nitrite transporter 2 from Toxoplasma gondii (strain ATCC 50611 / Me49).